Consider the following 117-residue polypeptide: Large ribosomal subunit protein bL19 (117 aa).

Belongs to the bacterial ribosomal protein bL19 family.

Functionally, this protein is located at the 30S-50S ribosomal subunit interface and may play a role in the structure and function of the aminoacyl-tRNA binding site. In Colwellia psychrerythraea (strain 34H / ATCC BAA-681) (Vibrio psychroerythus), this protein is Large ribosomal subunit protein bL19.